Consider the following 546-residue polypeptide: MSKDPGRILIFDTTLRDGEQSPGASLNLEEKLAIAHQLARLGVDVIEAGFPFASPGDFKAVNKIAEVVGGENGPIICGLARASTNDIKACYEAISPAPKKRIHTFIATSDIHLKHKLRKTRSDVLCIVPEMVSYAKSLVDDIEFSCEDASRSDPEFLYEVIQLAITSGATTINIPDTVGFTTPSEFGKLIFDINKNVPNIDEAIISVHGHNDLGLAVANFLEAAKNGARQLECTINGIGERAGNASLEELVMALHVRKSFFNSFFGRSSDSPTPLTAIRTEEITKTSRLVSNLTGMNVQPNKAIVGANAFAHESGIHQDGVLKNRLTYEIIDAKTVGLNDNKISLGKLSGRSAVRARLEEMGYDLSREDLNDAFARFKELADRKREITDRDLEAIVSEQVQLPESKFQLSHVQVSCGSTSKPTATVTLINTEDHTEDTAVAIGTGPVDAVCEALNALTKVPNELIEFSVKSVTEGIDALGEVTIRIRNKNKIYSGHSADTDVVVAAANAFVNALNRLVFSEKKNSIHPQFDDLENPKNKVLSNPKK.

Residues 8 to 271 (ILIFDTTLRD…NSFFGRSSDS (264 aa)) form the Pyruvate carboxyltransferase domain. 4 residues coordinate Mn(2+): D17, H208, H210, and N244. Positions 408 to 546 (QLSHVQVSCG…KNKVLSNPKK (139 aa)) are regulatory domain.

It belongs to the alpha-IPM synthase/homocitrate synthase family. LeuA type 1 subfamily. Homodimer. The cofactor is Mn(2+).

The protein localises to the cytoplasm. The enzyme catalyses 3-methyl-2-oxobutanoate + acetyl-CoA + H2O = (2S)-2-isopropylmalate + CoA + H(+). The protein operates within amino-acid biosynthesis; L-leucine biosynthesis; L-leucine from 3-methyl-2-oxobutanoate: step 1/4. Its function is as follows. Catalyzes the condensation of the acetyl group of acetyl-CoA with 3-methyl-2-oxobutanoate (2-ketoisovalerate) to form 3-carboxy-3-hydroxy-4-methylpentanoate (2-isopropylmalate). This Prochlorococcus marinus subsp. pastoris (strain CCMP1986 / NIES-2087 / MED4) protein is 2-isopropylmalate synthase.